We begin with the raw amino-acid sequence, 469 residues long: Keratin, type II cytoskeletal 7 (469 aa).

An N-acetylserine modification is found at S2. Phosphoserine occurs at positions 2, 6, and 7. Positions 2–90 (SIHFSSPVFT…DPSLQRVRQE (89 aa)) are head. S12 carries an O-linked (GlcNAc) serine glycan. R20 is modified (dimethylated arginine; alternate). R20 is subject to Omega-N-methylarginine; alternate. A phosphoserine mark is found at S53, S71, and S83. Residues 90–126 (EEREQIKTLNNKFASFIDKVRFLEQQNKLLETKWTLL) form a coil 1A region. The IF rod domain occupies 91-403 (EREQIKTLNN…KLLEGEESRL (313 aa)). T97 carries the post-translational modification Phosphothreonine. The linker 1 stretch occupies residues 127–144 (QEQKSAKSSRLPDIFEAQ). K130 is covalently cross-linked (Glycyl lysine isopeptide (Lys-Gly) (interchain with G-Cter in SUMO2)). A coil 1B region spans residues 145–236 (IAGLRGQLEA…TLNETELTEL (92 aa)). At K179 the chain carries N6-acetyllysine. The linker 12 stretch occupies residues 237 to 260 (QSQISDTSVVLSMDNSRSLDLDGI). Phosphoserine is present on residues S252 and S254. The tract at residues 261 to 399 (IAEVKAQYEE…ATYRKLLEGE (139 aa)) is coil 2. Residues K265 and K286 each participate in a glycyl lysine isopeptide (Lys-Gly) (interchain with G-Cter in SUMO2) cross-link. T289 is subject to Phosphothreonine. Glycyl lysine isopeptide (Lys-Gly) (interchain with G-Cter in SUMO2) cross-links involve residues K296 and K331. The segment at 400–469 (ESRLAGDGVG…ASASRRSARN (70 aa)) is tail.

This sequence belongs to the intermediate filament family. Heterotetramer of two type I and two type II keratins. Interacts with eukaryotic translation initiator factor 3 (eIF3) subunit EIF3S10. Interacts with GPER1. In terms of processing, arg-20 is dimethylated, probably to asymmetric dimethylarginine.

Its function is as follows. Blocks interferon-dependent interphase and stimulates DNA synthesis in cells. The protein is Keratin, type II cytoskeletal 7 of Pan troglodytes (Chimpanzee).